Reading from the N-terminus, the 1207-residue chain is DNA-directed RNA polymerase subunit beta' (1207 aa).

Residues Cys60, Cys62, Cys75, and Cys78 each coordinate Zn(2+). Residues Asp450, Asp452, and Asp454 each coordinate Mg(2+). Residues Cys818, Cys892, Cys899, and Cys902 each contribute to the Zn(2+) site.

This sequence belongs to the RNA polymerase beta' chain family. The RNAP catalytic core consists of 2 alpha, 1 beta, 1 beta' and 1 omega subunit. When a sigma factor is associated with the core the holoenzyme is formed, which can initiate transcription. Requires Mg(2+) as cofactor. Zn(2+) is required as a cofactor.

The catalysed reaction is RNA(n) + a ribonucleoside 5'-triphosphate = RNA(n+1) + diphosphate. Functionally, DNA-dependent RNA polymerase catalyzes the transcription of DNA into RNA using the four ribonucleoside triphosphates as substrates. The protein is DNA-directed RNA polymerase subunit beta' of Lactococcus lactis subsp. lactis (strain IL1403) (Streptococcus lactis).